The chain runs to 419 residues: UDP-N-acetylglucosamine 1-carboxyvinyltransferase 2 (419 aa).

22–23 (KN) is a binding site for phosphoenolpyruvate. R92 contacts UDP-N-acetyl-alpha-D-glucosamine. The active-site Proton donor is the C116. A 2-(S-cysteinyl)pyruvic acid O-phosphothioketal modification is found at C116. UDP-N-acetyl-alpha-D-glucosamine contacts are provided by residues 121-125 (RPIDL), D306, and I328.

This sequence belongs to the EPSP synthase family. MurA subfamily.

The protein localises to the cytoplasm. It carries out the reaction phosphoenolpyruvate + UDP-N-acetyl-alpha-D-glucosamine = UDP-N-acetyl-3-O-(1-carboxyvinyl)-alpha-D-glucosamine + phosphate. It functions in the pathway cell wall biogenesis; peptidoglycan biosynthesis. Cell wall formation. Adds enolpyruvyl to UDP-N-acetylglucosamine. The sequence is that of UDP-N-acetylglucosamine 1-carboxyvinyltransferase 2 from Streptococcus pyogenes serotype M18 (strain MGAS8232).